A 143-amino-acid chain; its full sequence is Large ribosomal subunit protein uL11 (143 aa).

Belongs to the universal ribosomal protein uL11 family. Part of the ribosomal stalk of the 50S ribosomal subunit. Interacts with L10 and the large rRNA to form the base of the stalk. L10 forms an elongated spine to which L12 dimers bind in a sequential fashion forming a multimeric L10(L12)X complex. Post-translationally, one or more lysine residues are methylated.

Forms part of the ribosomal stalk which helps the ribosome interact with GTP-bound translation factors. This chain is Large ribosomal subunit protein uL11, found in Rhizobium rhizogenes (strain K84 / ATCC BAA-868) (Agrobacterium radiobacter).